We begin with the raw amino-acid sequence, 566 residues long: Class II hydrophobin FOXG_02748 (566 aa).

Positions 1 to 22 are cleaved as a signal peptide; the sequence is MKSKSIMAASTVMELALAQASA. Cystine bridges form between Cys-497/Cys-546, Cys-507/Cys-537, Cys-508/Cys-520, and Cys-547/Cys-558.

This sequence belongs to the cerato-ulmin hydrophobin family. In terms of assembly, homodimer. Homodimers further self-assemble to form highly ordered films at water-air interfaces through intermolecular interactions.

It is found in the secreted. Its subcellular location is the cell wall. In terms of biological role, aerial growth, conidiation, and dispersal of filamentous fungi in the environment rely upon a capability of their secreting small amphipathic proteins called hydrophobins (HPBs) with low sequence identity. Class I can self-assemble into an outermost layer of rodlet bundles on aerial cell surfaces, conferring cellular hydrophobicity that supports fungal growth, development and dispersal; whereas Class II form highly ordered films at water-air interfaces through intermolecular interactions but contribute nothing to the rodlet structure. FOXG_02748 is a class II hydrophobin that is likely required for plant colonization. The sequence is that of Class II hydrophobin FOXG_02748 from Fusarium oxysporum f. sp. lycopersici (strain 4287 / CBS 123668 / FGSC 9935 / NRRL 34936) (Fusarium vascular wilt of tomato).